A 218-amino-acid chain; its full sequence is Alkylmercury lyase (218 aa).

This sequence belongs to the MerB family.

It carries out the reaction an alkylmercury + H(+) = an alkane + Hg(2+). Functionally, cleaves the carbon-mercury bond of organomercurials such as phenylmercuric acetate. One product is Hg(2+), which is subsequently detoxified by the mercuric reductase. The protein is Alkylmercury lyase of Clostridium butyricum.